The following is a 262-amino-acid chain: tRNA pseudouridine synthase A (262 aa).

The Nucleophile role is filled by Asp-54. Position 113 (Tyr-113) interacts with substrate.

This sequence belongs to the tRNA pseudouridine synthase TruA family. As to quaternary structure, homodimer.

It carries out the reaction uridine(38/39/40) in tRNA = pseudouridine(38/39/40) in tRNA. Formation of pseudouridine at positions 38, 39 and 40 in the anticodon stem and loop of transfer RNAs. This chain is tRNA pseudouridine synthase A, found in Lactobacillus acidophilus (strain ATCC 700396 / NCK56 / N2 / NCFM).